A 91-amino-acid polypeptide reads, in one-letter code: Ribonuclease P protein component 4 (91 aa).

Residues Cys-48, Cys-51, Cys-71, and Cys-74 each contribute to the Zn(2+) site.

The protein belongs to the eukaryotic/archaeal RNase P protein component 4 family. As to quaternary structure, consists of a catalytic RNA component and at least 4-5 protein subunits. It depends on Zn(2+) as a cofactor.

The protein resides in the cytoplasm. The catalysed reaction is Endonucleolytic cleavage of RNA, removing 5'-extranucleotides from tRNA precursor.. Its function is as follows. Part of ribonuclease P, a protein complex that generates mature tRNA molecules by cleaving their 5'-ends. In Picrophilus torridus (strain ATCC 700027 / DSM 9790 / JCM 10055 / NBRC 100828 / KAW 2/3), this protein is Ribonuclease P protein component 4.